We begin with the raw amino-acid sequence, 295 residues long: Tyrosine transport system permease protein (295 aa).

The next 8 helical transmembrane spans lie at 3–23, 57–77, 81–101, 122–142, 173–193, 200–220, 232–252, and 256–276; these read GIISVMTQSLILSIMALGVYI, VVATLMAILCGCTAGLVTGIL, FKISNLLSGILVMGMLYSINL, ISPIVLALAFVFICKILLDLF, ILGLMISNGLIALSGSLMAQF, NMGIGTLVLGIASIIIGITLF, IIVGSFIYQFTIYFAMSLGML, and LKLITAIVIIAFLATGNLNIS.

The protein belongs to the binding-protein-dependent transport system permease family. As to quaternary structure, the complex is probably composed of two ATP-binding proteins (CDR20291_0806), two transmembrane proteins (CDR20291_0807) and a solute-binding protein (CDR20291_0805).

It is found in the cell membrane. Probably part of an ABC transporter complex involved in tyrosine uptake. May also import phenylalanine. Probably responsible for the translocation of the substrate across the membrane. This is Tyrosine transport system permease protein from Clostridioides difficile (strain R20291) (Peptoclostridium difficile).